Reading from the N-terminus, the 230-residue chain is Ribonuclease HII (230 aa).

The RNase H type-2 domain occupies 28-217 (FRIAGIDEAG…VKEHLPSQPD (190 aa)). The a divalent metal cation site is built by Asp-34, Glu-35, and Asp-126. The disordered stretch occupies residues 209–230 (KEHLPSQPDSDTAGPSTGLFSF). The segment covering 215 to 230 (QPDSDTAGPSTGLFSF) has biased composition (polar residues).

It belongs to the RNase HII family. Mn(2+) is required as a cofactor. Mg(2+) serves as cofactor.

Its subcellular location is the cytoplasm. It catalyses the reaction Endonucleolytic cleavage to 5'-phosphomonoester.. In terms of biological role, endonuclease that specifically degrades the RNA of RNA-DNA hybrids. The polypeptide is Ribonuclease HII (Citrifermentans bemidjiense (strain ATCC BAA-1014 / DSM 16622 / JCM 12645 / Bem) (Geobacter bemidjiensis)).